The sequence spans 59 residues: DNA gyrase inhibitor YacG (59 aa).

The Zn(2+) site is built by cysteine 7, cysteine 10, cysteine 25, and cysteine 29.

The protein belongs to the DNA gyrase inhibitor YacG family. As to quaternary structure, interacts with GyrB. Requires Zn(2+) as cofactor.

In terms of biological role, inhibits all the catalytic activities of DNA gyrase by preventing its interaction with DNA. Acts by binding directly to the C-terminal domain of GyrB, which probably disrupts DNA binding by the gyrase. This chain is DNA gyrase inhibitor YacG, found in Geobacter sulfurreducens (strain ATCC 51573 / DSM 12127 / PCA).